The primary structure comprises 174 residues: NADH-quinone oxidoreductase subunit I (174 aa).

4Fe-4S ferredoxin-type domains lie at 44-74 (LNRY…VEGD) and 90-119 (RVYQ…MTND). [4Fe-4S] cluster is bound by residues Cys-54, Cys-57, Cys-60, Cys-64, Cys-99, Cys-102, Cys-105, and Cys-109.

Belongs to the complex I 23 kDa subunit family. As to quaternary structure, NDH-1 is composed of 14 different subunits. Subunits NuoA, H, J, K, L, M, N constitute the membrane sector of the complex. [4Fe-4S] cluster is required as a cofactor.

The protein localises to the cell membrane. It catalyses the reaction a quinone + NADH + 5 H(+)(in) = a quinol + NAD(+) + 4 H(+)(out). NDH-1 shuttles electrons from NADH, via FMN and iron-sulfur (Fe-S) centers, to quinones in the respiratory chain. The immediate electron acceptor for the enzyme in this species is believed to be menaquinone. Couples the redox reaction to proton translocation (for every two electrons transferred, four hydrogen ions are translocated across the cytoplasmic membrane), and thus conserves the redox energy in a proton gradient. The protein is NADH-quinone oxidoreductase subunit I of Mycobacterium sp. (strain JLS).